The chain runs to 423 residues: Core protease OPG082 (423 aa).

Catalysis depends on residues histidine 241, aspartate 248, and cysteine 328.

It belongs to the peptidase C57 family.

The protein resides in the virion. In terms of biological role, late protein responsible for processing most or all of the viral core and membrane proteins known to undergo morphogenesis-associated proteolysis. These proteolytic events are involved in the transformation of immature virions (IV) into mature virions (MV). Probably cleaves at least the OPG129, OPG136, OPG098, and OPG144 precursors preferentially at Ala-Gly-|-Ala motifs. Also seems to process Ala-Gly-|-Ser and Ala-Gly-|-Thr motifs. The protein is Core protease OPG082 (OPG083) of Homo sapiens (Human).